Reading from the N-terminus, the 146-residue chain is 3-dehydroquinate dehydratase (146 aa).

The active-site Proton acceptor is the Tyr22. The substrate site is built by Asn73, His79, and Asp86. The Proton donor role is filled by His99. Substrate-binding positions include Ile100–Ser101 and Arg110.

This sequence belongs to the type-II 3-dehydroquinase family. Homododecamer.

The enzyme catalyses 3-dehydroquinate = 3-dehydroshikimate + H2O. Its pathway is metabolic intermediate biosynthesis; chorismate biosynthesis; chorismate from D-erythrose 4-phosphate and phosphoenolpyruvate: step 3/7. In terms of biological role, catalyzes a trans-dehydration via an enolate intermediate. The protein is 3-dehydroquinate dehydratase of Prochlorococcus marinus subsp. pastoris (strain CCMP1986 / NIES-2087 / MED4).